Consider the following 429-residue polypeptide: Adenylosuccinate synthetase (429 aa).

GTP is bound by residues 12-18 (GDEGKGK) and 40-42 (GHT). Aspartate 13 functions as the Proton acceptor in the catalytic mechanism. Aspartate 13 and glycine 40 together coordinate Mg(2+). Residues 13–16 (DEGK), 38–41 (NAGH), threonine 129, arginine 143, glutamine 224, threonine 239, and arginine 303 each bind IMP. Histidine 41 serves as the catalytic Proton donor. 299-305 (VTTGRAR) provides a ligand contact to substrate. Residues arginine 305, 331–333 (KLD), and 413–415 (GVG) each bind GTP.

The protein belongs to the adenylosuccinate synthetase family. Homodimer. Requires Mg(2+) as cofactor.

The protein resides in the cytoplasm. It carries out the reaction IMP + L-aspartate + GTP = N(6)-(1,2-dicarboxyethyl)-AMP + GDP + phosphate + 2 H(+). It participates in purine metabolism; AMP biosynthesis via de novo pathway; AMP from IMP: step 1/2. In terms of biological role, plays an important role in the de novo pathway of purine nucleotide biosynthesis. Catalyzes the first committed step in the biosynthesis of AMP from IMP. This is Adenylosuccinate synthetase from Rhodococcus jostii (strain RHA1).